A 151-amino-acid polypeptide reads, in one-letter code: Large ribosomal subunit protein uL30 (151 aa).

The protein belongs to the universal ribosomal protein uL30 family. As to quaternary structure, part of the 50S ribosomal subunit.

The polypeptide is Large ribosomal subunit protein uL30 (Methanothrix thermoacetophila (strain DSM 6194 / JCM 14653 / NBRC 101360 / PT) (Methanosaeta thermophila)).